Here is a 123-residue protein sequence, read N- to C-terminus: MALNNVSLSSGDQRSRVAYRSSHGDLRPRASALAMVSGDGFLVSRPEAIHLGPRQAVRPSVRAESRRVDGGGRSPREPDGRGRSRQARFSPYPIPAVEPDLLRSVLQQRLIALGGVIAARISV.

Positions 1–12 are enriched in polar residues; that stretch reads MALNNVSLSSGD. 2 disordered regions span residues 1-25 and 53-91; these read MALN…SHGD and PRQA…RFSP. Residues 61–82 are compositionally biased toward basic and acidic residues; the sequence is VRAESRRVDGGGRSPREPDGRG.

This is an uncharacterized protein from Homo sapiens (Human).